Here is a 307-residue protein sequence, read N- to C-terminus: MEFVFLGTGAGVPSKGRNVSAIALQLLEERGQTWLFDCGEATQHQILHTSVRPRRIEKIFITHLHGDHIFGLPGLLGSRSFQGGTTPLTVYGPKGIKQFIEVALSVSTTHVKYPLEVVEITEEGTVFEDNEFYVETKRLSHGIECFGYRIVEKDIQGALLVDKLLEMGVKPGPIFKRLKDGEVVELEDGTILNGNEFIGPPQKGRIITILGDTRYCEASRELAQDADVLVHEATFAAEDEQQAHDYFHSTSKQAASIALQANAKRLILTHISSRYQGDTYKELLKEARELFSNTEIATDLKSFPVEK.

Residues His-63, His-65, Asp-67, His-68, His-141, Asp-212, and His-270 each coordinate Zn(2+). The active-site Proton acceptor is Asp-67.

The protein belongs to the RNase Z family. Homodimer. It depends on Zn(2+) as a cofactor.

It carries out the reaction Endonucleolytic cleavage of RNA, removing extra 3' nucleotides from tRNA precursor, generating 3' termini of tRNAs. A 3'-hydroxy group is left at the tRNA terminus and a 5'-phosphoryl group is left at the trailer molecule.. Its function is as follows. Zinc phosphodiesterase, which displays some tRNA 3'-processing endonuclease activity. Probably involved in tRNA maturation, by removing a 3'-trailer from precursor tRNA. This chain is Ribonuclease Z, found in Bacillus cereus (strain G9842).